A 664-amino-acid polypeptide reads, in one-letter code: Probable LRR receptor-like serine/threonine-protein kinase At1g63430 (664 aa).

Residues 1–22 (MRSKYFCSLALVLGLFFVSCDG) form the signal peptide. Residues 23–288 (FASNEVQALR…KHHRASKPKW (266 aa)) lie on the Extracellular side of the membrane. N-linked (GlcNAc...) asparagine glycosylation is present at Asn-75. 4 LRR repeats span residues 94–116 (YLQELILHGNILIGTIPKEIGNL), 118–140 (NLKILDLGNNHLMGPIPAEIGSL), 142–165 (GIMIINLQSNGLTGKLPAELGNLK), and 166–178 (YLRELHIDRNRLQ). A glycan (N-linked (GlcNAc...) asparagine) is linked at Asn-197. Residues 289 to 309 (LLALEIVTGSMVGLLLLVALF) traverse the membrane as a helical segment. The Cytoplasmic portion of the chain corresponds to 310-664 (SAVHRWNNRS…LAWAELALDS (355 aa)). The region spanning 360–642 (EDFSNIIGLS…ELCETLESRI (283 aa)) is the Protein kinase domain.

Belongs to the protein kinase superfamily. Ser/Thr protein kinase family.

The protein localises to the cell membrane. The catalysed reaction is L-seryl-[protein] + ATP = O-phospho-L-seryl-[protein] + ADP + H(+). It catalyses the reaction L-threonyl-[protein] + ATP = O-phospho-L-threonyl-[protein] + ADP + H(+). The chain is Probable LRR receptor-like serine/threonine-protein kinase At1g63430 from Arabidopsis thaliana (Mouse-ear cress).